The chain runs to 78 residues: UPF0612 protein new22 (78 aa).

This sequence belongs to the UPF0612 family.

The protein is UPF0612 protein new22 (new22) of Schizosaccharomyces pombe (strain 972 / ATCC 24843) (Fission yeast).